An 88-amino-acid chain; its full sequence is Small ribosomal subunit protein bS20 (88 aa).

Belongs to the bacterial ribosomal protein bS20 family.

Binds directly to 16S ribosomal RNA. The chain is Small ribosomal subunit protein bS20 from Aromatoleum aromaticum (strain DSM 19018 / LMG 30748 / EbN1) (Azoarcus sp. (strain EbN1)).